The following is a 64-amino-acid chain: MPKMKTDKGVQKRFKKTANGFKRKQAHLRHILTKKSTKRKRHLRAKCLVAKSDVPAIARQLPYA.

It belongs to the bacterial ribosomal protein bL35 family.

In Shewanella loihica (strain ATCC BAA-1088 / PV-4), this protein is Large ribosomal subunit protein bL35.